The sequence spans 396 residues: Proton-coupled antiporter flippase LtaA (396 aa).

Transmembrane regions (helical) follow at residues 15–34 (FILM…MYIL), 46–73 (IAVA…GFLL), 80–99 (IVLT…VIWF), 105–126 (VIIF…IMLS), 138–159 (GYVY…NLLI), 165–184 (RFAF…YYFV), 211–231 (LLLF…VPIL), 243–263 (TIEY…SMLF), 275–297 (FMYG…LSMI), 303–326 (LWII…TFMA), 338–358 (WGVF…FGGL), and 370–390 (FYFS…YFIV).

This sequence belongs to the major facilitator superfamily. LtaA family.

The protein resides in the cell membrane. It participates in cell wall biogenesis; lipoteichoic acid biosynthesis. In terms of biological role, proton-coupled antiporter flippase that catalyzes the translocation, from the inner to the outer leaflet of the cell membrane, of the lipid-linked disaccharide (anchor-LLD) that anchors lipoteichoic acids (LTA) to the cell membrane. This Staphylococcus aureus (strain USA300) protein is Proton-coupled antiporter flippase LtaA (ltaA).